The following is a 429-amino-acid chain: Probable M18 family aminopeptidase 2 (429 aa).

Residues histidine 82, histidine 156, and histidine 401 each contribute to the Zn(2+) site.

It belongs to the peptidase M18 family. Zn(2+) serves as cofactor.

The polypeptide is Probable M18 family aminopeptidase 2 (Pseudomonas entomophila (strain L48)).